The following is a 223-amino-acid chain: Ribose-5-phosphate isomerase A (223 aa).

Substrate-binding positions include 28–31 (TGST), 81–84 (DGAD), and 94–97 (KGGG). Glu-103 (proton acceptor) is an active-site residue. Lys-121 provides a ligand contact to substrate.

This sequence belongs to the ribose 5-phosphate isomerase family. In terms of assembly, homodimer.

It carries out the reaction aldehydo-D-ribose 5-phosphate = D-ribulose 5-phosphate. The protein operates within carbohydrate degradation; pentose phosphate pathway; D-ribose 5-phosphate from D-ribulose 5-phosphate (non-oxidative stage): step 1/1. Its function is as follows. Catalyzes the reversible conversion of ribose-5-phosphate to ribulose 5-phosphate. This Janthinobacterium sp. (strain Marseille) (Minibacterium massiliensis) protein is Ribose-5-phosphate isomerase A.